The primary structure comprises 105 residues: Met repressor (105 aa).

It belongs to the MetJ family. In terms of assembly, homodimer.

Its subcellular location is the cytoplasm. This regulatory protein, when combined with SAM (S-adenosylmethionine) represses the expression of the methionine regulon and of enzymes involved in SAM synthesis. In Vibrio vulnificus (strain CMCP6), this protein is Met repressor.